A 45-amino-acid chain; its full sequence is Iota-conotoxin-like R11.10 (45 aa).

4 cysteine pairs are disulfide-bonded: C5-C19, C12-C22, C18-C27, and C21-C36. Residue L43 is modified to D-leucine. Position 45 (R45) is a propeptide, removed by a carboxypeptidase.

This sequence belongs to the conotoxin I1 superfamily. Expressed by the venom duct.

Its subcellular location is the secreted. Functionally, iota-conotoxins bind to voltage-gated sodium channels (Nav) and act as agonists by shifting the voltage-dependence of activation to more hyperpolarized levels. Produces general excitatory symptoms. In Conus radiatus (Rayed cone), this protein is Iota-conotoxin-like R11.10.